Consider the following 1507-residue polypeptide: Protein TIC 214 (1507 aa).

6 consecutive transmembrane segments (helical) span residues isoleucine 4–glycine 24, threonine 53–leucine 73, leucine 81–tyrosine 101, alanine 129–phenylalanine 149, isoleucine 163–leucine 183, and leucine 202–cysteine 222.

The protein belongs to the TIC214 family. As to quaternary structure, part of the Tic complex.

The protein localises to the plastid. It is found in the chloroplast inner membrane. Its function is as follows. Involved in protein precursor import into chloroplasts. May be part of an intermediate translocation complex acting as a protein-conducting channel at the inner envelope. The sequence is that of Protein TIC 214 from Staurastrum punctulatum (Green alga).